A 104-amino-acid chain; its full sequence is Conantokin-P (104 aa).

The first 26 residues, 1–26, serve as a signal peptide directing secretion; it reads MQLYTYLYLLVPLVTFHLILSTGTLA. A propeptide spanning residues 27-80 is cleaved from the precursor; the sequence is HGGTLTERRSTDTTALKPEPVLLQKSDARSTDDNDKDRLTQMKRILKKRGNKAR. The segment at 29-87 is disordered; sequence GTLTERRSTDTTALKPEPVLLQKSDARSTDDNDKDRLTQMKRILKKRGNKARGEEEHSK. Positions 52 to 66 are enriched in basic and acidic residues; it reads SDARSTDDNDKDRLT. 4-carboxyglutamate occurs at positions 83, 84, 90, 94, and 103. A divalent metal cation is bound by residues E90 and E94. C91 and C104 are joined by a disulfide.

It belongs to the conotoxin B superfamily. As to expression, expressed by the venom duct.

The protein localises to the secreted. Its function is as follows. Conantokins inhibit N-methyl-D-aspartate (NMDA) receptors. This toxin has the highest potency for the NR2B/GRIN2B subunit, followed by NR2A/GRIN2A, NR2C/GRIN2C, and NR2D/GRIN2D subunits. In Conus purpurascens (Purple cone), this protein is Conantokin-P.